We begin with the raw amino-acid sequence, 306 residues long: MREKEPSGLLVLDKPEGMTSSTLVTRVKRLLGLRKAGHCGTLDPFATGVLLVCVNQATRFAEQLTGQTKVYRFTARLGIETDTLDRTGTVVRTRDDVVPSERELLEAVRLHEGTQVQEVPRYAAVKVQGKRLYELARKGIDVELPRREVHIHRFDLISYRYPEVVLETKCSKGTYVRQLAADLGRRLGCGAHVMHLRRLACGPFGLERASSLEQMHDGASDGSWLAKLVPMADALSHLPALTIEDGQVLSRLRYGQLDADWEAEHSGRFSRRVGPVRIVTADGRLAALWWPWPESEHQRRLRVFQL.

The Nucleophile role is filled by Asp-43.

This sequence belongs to the pseudouridine synthase TruB family. Type 1 subfamily.

It carries out the reaction uridine(55) in tRNA = pseudouridine(55) in tRNA. Its function is as follows. Responsible for synthesis of pseudouridine from uracil-55 in the psi GC loop of transfer RNAs. The protein is tRNA pseudouridine synthase B of Syntrophobacter fumaroxidans (strain DSM 10017 / MPOB).